Reading from the N-terminus, the 436-residue chain is GTPase Der (436 aa).

2 consecutive EngA-type G domains span residues 4–167 (PTVA…PVEE) and 175–351 (IRFS…ESQN). GTP contacts are provided by residues 10–17 (GRPNVGKS), 57–61 (DTGGI), 119–122 (NKVD), 181–188 (GRPNVGKS), 229–233 (DTAGM), and 294–297 (NKWD). Residues 352-436 (KRIPSAVLND…PIHLIARKRK (85 aa)) enclose the KH-like domain.

The protein belongs to the TRAFAC class TrmE-Era-EngA-EngB-Septin-like GTPase superfamily. EngA (Der) GTPase family. In terms of assembly, associates with the 50S ribosomal subunit.

Its function is as follows. GTPase that plays an essential role in the late steps of ribosome biogenesis. This chain is GTPase Der, found in Streptococcus pyogenes serotype M28 (strain MGAS6180).